We begin with the raw amino-acid sequence, 470 residues long: MGGAVVDEGPTGIKAPDGGWGWAVLFGCFIITGFSYAFPKAVSVFFKELMHEFGIGYSDTAWISSILLAMLYGTGPLCSVCVNRFGCRPVMLVGGLFASLGMVAASFCRSIIQIYLTTGVITGLGLALNFQPSLIMLNRYFNKRRPIANGLAAAGSPVFLCALSPLGQLLQDHYGWRGGFLILGGLLLNCCVCAALMRPLVAPQVGGGTEPRGPQRPPQRLLDLSVFRDRGFLIYAVAASIMVLGLFVPPVFVVSYAKDMGVPDTKAAFLLTILGFIDIFARPTAGFITGLKKVRPYSVYLFSFAMFFNGFTDLTGSTATDYGGLVVFCIFFGISYGMVGALQFEVLMAIVGTQKFSSAIGLVLLLEAVAVLIGPPSGGKLLDATKVYKYVFILAGAEVLTSSLVLLLGNFFCIGKRKRPEVTEPEEVASEEKLHKPPVDVGVDSREVEHFLKAEPEKNGEVVHTPETSV.

At 1–17 (MGGAVVDEGPTGIKAPD) the chain is on the cytoplasmic side. The chain crosses the membrane as a helical span at residues 18–38 (GGWGWAVLFGCFIITGFSYAF). Over 39–61 (PKAVSVFFKELMHEFGIGYSDTA) the chain is Extracellular. Residues 62–82 (WISSILLAMLYGTGPLCSVCV) traverse the membrane as a helical segment. The Cytoplasmic segment spans residues 83-84 (NR). Residues 85–105 (FGCRPVMLVGGLFASLGMVAA) traverse the membrane as a helical segment. Residues 106 to 109 (SFCR) lie on the Extracellular side of the membrane. A helical membrane pass occupies residues 110–130 (SIIQIYLTTGVITGLGLALNF). The Cytoplasmic segment spans residues 131–149 (QPSLIMLNRYFNKRRPIAN). The helical transmembrane segment at 150 to 170 (GLAAAGSPVFLCALSPLGQLL) threads the bilayer. At 171–179 (QDHYGWRGG) the chain is on the extracellular side. Residues 180 to 200 (FLILGGLLLNCCVCAALMRPL) form a helical membrane-spanning segment. Residues 201 to 231 (VAPQVGGGTEPRGPQRPPQRLLDLSVFRDRG) are Cytoplasmic-facing. A helical transmembrane segment spans residues 232–252 (FLIYAVAASIMVLGLFVPPVF). Over 253 to 267 (VVSYAKDMGVPDTKA) the chain is Extracellular. The helical transmembrane segment at 268 to 288 (AFLLTILGFIDIFARPTAGFI) threads the bilayer. Topologically, residues 289 to 298 (TGLKKVRPYS) are cytoplasmic. The helical transmembrane segment at 299 to 319 (VYLFSFAMFFNGFTDLTGSTA) threads the bilayer. Residues 320–321 (TD) are Extracellular-facing. The helical transmembrane segment at 322–342 (YGGLVVFCIFFGISYGMVGAL) threads the bilayer. Topologically, residues 343–355 (QFEVLMAIVGTQK) are cytoplasmic. A helical membrane pass occupies residues 356–376 (FSSAIGLVLLLEAVAVLIGPP). Topologically, residues 377–391 (SGGKLLDATKVYKYV) are extracellular. The chain crosses the membrane as a helical span at residues 392–412 (FILAGAEVLTSSLVLLLGNFF). The Cytoplasmic segment spans residues 413 to 470 (CIGKRKRPEVTEPEEVASEEKLHKPPVDVGVDSREVEHFLKAEPEKNGEVVHTPETSV). Basolateral sorting signal regions lie at residues 429–446 (ASEE…VDSR) and 446–470 (REVE…ETSV). Ser430 carries the phosphoserine modification. Position 465 is a phosphothreonine (Thr465). Residue Ser469 is modified to Phosphoserine.

This sequence belongs to the major facilitator superfamily. Monocarboxylate porter (TC 2.A.1.13) family. As to quaternary structure, interacts with BSG; interaction mediates SLC16A3 targeting to the plasma membrane.

It is found in the cell membrane. Its subcellular location is the basolateral cell membrane. The enzyme catalyses (S)-lactate(in) + H(+)(in) = (S)-lactate(out) + H(+)(out). It carries out the reaction pyruvate(out) + H(+)(out) = pyruvate(in) + H(+)(in). Its function is as follows. Proton-dependent transporter of monocarboxylates such as L-lactate and pyruvate. Plays a predominant role in the L-lactate efflux from highly glycolytic cells. In Mus musculus (Mouse), this protein is Monocarboxylate transporter 4 (Slc16a3).